Here is a 351-residue protein sequence, read N- to C-terminus: O-methyltransferase apf6 (351 aa).

S-adenosyl-L-methionine contacts are provided by residues 231–232 (GG), 279–280 (NF), and arginine 295. The Proton acceptor role is filled by histidine 299.

This sequence belongs to the class I-like SAM-binding methyltransferase superfamily. Cation-independent O-methyltransferase family.

The protein operates within secondary metabolite biosynthesis. Functionally, O-methyltransferase; part of the gene cluster that mediates the biosynthesis of the cyclic tetrapeptide apicidin F (APF). The non-ribosomal peptide synthetase apf1 incorporates four different amino acids to produce apicidin F: L-phenylalanine, D-pipecolic acid (D-pip), N-methoxy-L-tryptophan and L-2-aminooctanedioic acid. L-Phenylalanine is the only proteinogenic amino acid directly used by apf1. The 3 other apf1 substrates are non-proteinogenic and have to be modified by other enzymes of the cluster. Lysine is converted to delta-1-pyrroline-5-carboxylate (P5C) which is reduced to L-pipecolic acid (L-pip) by apf3. L-pip is epimerized to D-pip, probably by apf1 activity, prior to incorporation. L-Tryptophan is N-oxidyzed by one of the cytochrome P450 monooxygenases (apf7 or apf8), and further methylated at the hydroxy group by the O-methyltransferase apf6 to yield N-methoxy-L-tryptophan. The synthesis of the fourth apf1 substrate is more complex. The fatty acid synthase apf5 is involved in the synthesis of the octanoic acid backbone of L-2-aminooctanedioic acid by fixing one acetyl-CoA unit and three malonyl-CoA units. Then one of the cytochrome P450 monooxygenases (apf7 or apf8) may oxidize this backbone to 2-oxooctanoic acid. The aminotransferase apf4 is predicted to catalyze the exchange of the keto group with an amino group. The next step would be the oxidation of 2-aminooctanoic acid by one of the cytochrome P450 monooxygenases (apf7 or apf8). The last step is the oxidation of 2-amino-8-hydroxyoctanoic acid to 2-aminooctanedioic acid is catalyzed by the FAD-dependent monooxygenase apf9. The protein is O-methyltransferase apf6 of Gibberella fujikuroi (strain CBS 195.34 / IMI 58289 / NRRL A-6831) (Bakanae and foot rot disease fungus).